The primary structure comprises 163 residues: MSNPKNKKEKTFLGIDYGQRRIGLAYAASPLFISLPIGCIEAGNTVEATAKILFNIIQERSVSCVVLGNPIPMQKGQKSALQEEITKLSSLIQESCGVEVILWDERLSSAQAERMLKGDCGLSRKKRKGKTDTIAATLILTSFLESSPPKIFLKKTCPKPPVR.

It belongs to the YqgF nuclease family.

The protein localises to the cytoplasm. Could be a nuclease involved in processing of the 5'-end of pre-16S rRNA. The protein is Putative pre-16S rRNA nuclease of Chlamydia caviae (strain ATCC VR-813 / DSM 19441 / 03DC25 / GPIC) (Chlamydophila caviae).